Consider the following 617-residue polypeptide: MISPSLELLHSGLCKFPEVEGKMTTFKEAVTFKDVAVVFTEEELGLLDPAQRKLYRDVMLENFRNLLSVGNQPFHQDTFHFLGKEKFWKMKTTSQREGNSGGKIQIEMETVPEAGPHEEWSCQQIWEQIASDLTRSQNSIRNSSQFFKEGDVPCQIEARLSISHVQQKPYRCNECKQSFSDVSVFDLHQQSHSGEKSHTCGECGKSFCYSPALHIHQRVHMGEKCYKCDVCGKEFNQSSHLQTHQRVHTGEKPFKCGQCGKGFHSRSALNVHCKLHTGEKPYNCEECGKAFIHDSQLQEHQRIHTGEKPFKCDICGKSFRVRSRLNRHSMVHTGEKPFRCDTCGKNFRQRSALNSHSMVHIEEKPYKCEQCGKGFICRRDFCKHQMVHTGEKPYNCKECGKTFRWSSCLLNHQQVHSGQKSFKCEECGKGFYTNSRRSSHQRSHNGEKPYNCEECGKDYKRRLDLEFHQRVHTGERPYNCKECGKSFGWASCLLKHQRLHSGEKPFKCEECGKRFTQSSQLHSHQTCHTGEKLYKCEQCEKGYNSKFNLDMHQRVHGGERPYNCKECGKSFGWASCLLKHQRLHSGEKPLKSGVWEEIYSEFTASFTSVSLCGRKAI.

Positions Val30–Ser100 constitute a KRAB domain. 3 consecutive C2H2-type zinc fingers follow at residues Tyr170 to His192, His198 to His220, and Tyr226 to His248. Residues Phe254–His276 form a C2H2-type 4; degenerate zinc finger. C2H2-type zinc fingers lie at residues Tyr282–His304, Phe310–His332, Phe338–His360, Tyr366–His388, Tyr394–His416, Phe422–His444, Tyr450–His472, Tyr478–His500, Phe506–His528, Tyr534–His556, and Tyr562–His584.

It belongs to the krueppel C2H2-type zinc-finger protein family.

Its subcellular location is the nucleus. In terms of biological role, may be involved in transcriptional regulation. The polypeptide is Zinc finger protein 221 (ZNF221) (Homo sapiens (Human)).